We begin with the raw amino-acid sequence, 180 residues long: Ribonuclease M5 (180 aa).

In terms of domain architecture, Toprim spans 5–90; the sequence is KQIIIVEGKT…NAFIKKDDIS (86 aa). Positions 11, 59, and 61 each coordinate Mg(2+).

It belongs to the ribonuclease M5 family. It depends on Mg(2+) as a cofactor.

The protein resides in the cytoplasm. The catalysed reaction is Endonucleolytic cleavage of RNA, removing 21 and 42 nucleotides, respectively, from the 5'- and 3'-termini of a 5S-rRNA precursor.. In terms of biological role, required for correct processing of both the 5' and 3' ends of 5S rRNA precursor. Cleaves both sides of a double-stranded region yielding mature 5S rRNA in one step. The polypeptide is Ribonuclease M5 (Mycoplasma capricolum subsp. capricolum (strain California kid / ATCC 27343 / NCTC 10154)).